Reading from the N-terminus, the 419-residue chain is Transcription termination factor Rho (419 aa).

In terms of domain architecture, Rho RNA-BD spans 48–123 (GFTCSGTLEI…VRLDSINGDH (76 aa)). Residues 169 to 174 (GKGQRA), 181 to 186 (KIGKTV), and R212 each bind ATP.

It belongs to the Rho family. Homohexamer. The homohexamer assembles into an open ring structure.

Its function is as follows. Facilitates transcription termination by a mechanism that involves Rho binding to the nascent RNA, activation of Rho's RNA-dependent ATPase activity, and release of the mRNA from the DNA template. The polypeptide is Transcription termination factor Rho (Neisseria gonorrhoeae).